The primary structure comprises 184 residues: Large ribosomal subunit protein uL22 (184 aa).

Residues 160-184 are disordered; it reads PEEEVAQKKKISQKKLKKQKLMARE. Residues 167–184 show a composition bias toward basic residues; it reads KKKISQKKLKKQKLMARE.

Belongs to the universal ribosomal protein uL22 family. As to quaternary structure, component of the large ribosomal subunit.

The protein resides in the cytoplasm. Component of the large ribosomal subunit. The ribosome is a large ribonucleoprotein complex responsible for the synthesis of proteins in the cell. The sequence is that of Large ribosomal subunit protein uL22 (RPL17) from Bos taurus (Bovine).